The sequence spans 207 residues: Putative 3-methyladenine DNA glycosylase (207 aa).

It belongs to the DNA glycosylase MPG family.

This chain is Putative 3-methyladenine DNA glycosylase, found in Listeria monocytogenes serotype 4b (strain CLIP80459).